A 278-amino-acid chain; its full sequence is Dermonecrotic toxin Ls4SicTox-alphaIII1ii (278 aa).

H5 is an active-site residue. Residues E25 and D27 each coordinate Mg(2+). H40 acts as the Nucleophile in catalysis. C44 and C50 are oxidised to a cystine. D84 serves as a coordination point for Mg(2+).

Belongs to the arthropod phospholipase D family. Class I subfamily. The cofactor is Mg(2+). In terms of tissue distribution, expressed by the venom gland.

The protein resides in the secreted. The enzyme catalyses an N-(acyl)-sphingosylphosphocholine = an N-(acyl)-sphingosyl-1,3-cyclic phosphate + choline. It catalyses the reaction an N-(acyl)-sphingosylphosphoethanolamine = an N-(acyl)-sphingosyl-1,3-cyclic phosphate + ethanolamine. It carries out the reaction a 1-acyl-sn-glycero-3-phosphocholine = a 1-acyl-sn-glycero-2,3-cyclic phosphate + choline. The catalysed reaction is a 1-acyl-sn-glycero-3-phosphoethanolamine = a 1-acyl-sn-glycero-2,3-cyclic phosphate + ethanolamine. Functionally, dermonecrotic toxins cleave the phosphodiester linkage between the phosphate and headgroup of certain phospholipids (sphingolipid and lysolipid substrates), forming an alcohol (often choline) and a cyclic phosphate. This toxin acts on sphingomyelin (SM). It may also act on ceramide phosphoethanolamine (CPE), lysophosphatidylcholine (LPC) and lysophosphatidylethanolamine (LPE), but not on lysophosphatidylserine (LPS), and lysophosphatidylglycerol (LPG). It acts by transphosphatidylation, releasing exclusively cyclic phosphate products as second products. Induces dermonecrosis, hemolysis, increased vascular permeability, edema, inflammatory response, and platelet aggregation. The protein is Dermonecrotic toxin Ls4SicTox-alphaIII1ii of Loxosceles sp. (strain 4 GJB-2008) (Recluse spider).